Reading from the N-terminus, the 133-residue chain is Large-conductance mechanosensitive channel (133 aa).

Helical transmembrane passes span 10-30 (FAVKGNVMDMAVGVIIGGAFG) and 76-96 (GAFIQNIFDFLIIAIAVFSMV).

This sequence belongs to the MscL family. In terms of assembly, homopentamer.

It is found in the cell inner membrane. In terms of biological role, channel that opens in response to stretch forces in the membrane lipid bilayer. May participate in the regulation of osmotic pressure changes within the cell. The polypeptide is Large-conductance mechanosensitive channel (Haemophilus ducreyi (strain 35000HP / ATCC 700724)).